Consider the following 112-residue polypeptide: MSDKPKRPLSAYMLWLNSARESIKRENPGIKVTEVAKRGGELWRAMKDKSEWEAKAAKAKDDYDRAVKEFEANGGSSAANGGGAKKRAKPAKKVAKKSKKEESDEDDDDESE.

The HMG box DNA-binding region spans 5-71; that stretch reads PKRPLSAYML…DYDRAVKEFE (67 aa). Phosphoserine is present on S10. Y12 carries the phosphotyrosine modification. Residues 72–112 are disordered; the sequence is ANGGSSAANGGGAKKRAKPAKKVAKKSKKEESDEDDDDESE. Residues 84 to 98 show a composition bias toward basic residues; that stretch reads AKKRAKPAKKVAKKS. 2 positions are modified to phosphoserine: S103 and S111. A compositionally biased stretch (acidic residues) spans 103–112; the sequence is SDEDDDDESE.

The protein belongs to the HMGB family.

Its subcellular location is the nucleus. The protein localises to the chromosome. In terms of biological role, binds preferentially single-stranded DNA and unwinds double-stranded DNA. Prefers sites containing the sequence 5'-ttg-3'. Facilitates DNA bending. Associated with early embryonic chromatin in the absence of histone H1. The chain is High mobility group protein D (HmgD) from Drosophila melanogaster (Fruit fly).